The primary structure comprises 540 residues: ADP,ATP carrier protein 2 (540 aa).

11 helical membrane-spanning segments follow: residues 24-44 (FSKF…YCLL), 62-82 (VIPF…TMVY), 94-114 (VFYC…VIIY), 151-171 (IYYV…FWGL), 223-243 (SVML…IWLY), 295-315 (LLGL…FEVV), 337-357 (ITTL…GQCI), 367-387 (LVTP…IFAA), 391-411 (ISIF…WTGG), 458-478 (SGGS…AASL), and 480-500 (VIAL…AYIG).

It belongs to the ADP/ATP translocase tlc family.

It localises to the cell membrane. This is ADP,ATP carrier protein 2 (tlcB) from Chlamydia pneumoniae (Chlamydophila pneumoniae).